Reading from the N-terminus, the 251-residue chain is Chlorophyll a-b binding protein 4, chloroplastic (251 aa).

Residue Ser-35 is modified to Phosphoserine. A chlorophyll b-binding site is contributed by Trp-57. Positions 77 and 96 each coordinate chlorophyll a. Arg-101 is a chlorophyll b binding site. 2 helical membrane passes run 102–122 (WAML…IGII) and 135–155 (YFAS…YVEI). Residues Ser-138, Val-144, Glu-154, and Arg-157 each coordinate chlorophyll b. 6 residues coordinate chlorophyll a: Lys-204, Glu-205, Asn-208, Arg-210, Gln-222, and His-237.

Belongs to the light-harvesting chlorophyll a/b-binding (LHC) protein family. The LHC complex consists of chlorophyll a-b binding proteins. Red-emitting heterodimer with LHCA1. Binds at least 14 chlorophylls (8 Chl-a and 6 Chl-b) and carotenoids such as lutein and neoxanthin. is required as a cofactor. In terms of processing, photoregulated by reversible phosphorylation of its threonine residues.

The protein resides in the plastid. Its subcellular location is the chloroplast thylakoid membrane. Functionally, the light-harvesting complex (LHC) functions as a light receptor, it captures and delivers excitation energy to photosystems with which it is closely associated. This is Chlorophyll a-b binding protein 4, chloroplastic from Arabidopsis thaliana (Mouse-ear cress).